The following is a 653-amino-acid chain: Beta-galactosidase-1-like protein 3 (653 aa).

E227 functions as the Proton donor in the catalytic mechanism. Residue E301 is the Nucleophile of the active site.

This sequence belongs to the glycosyl hydrolase 35 family.

In Homo sapiens (Human), this protein is Beta-galactosidase-1-like protein 3 (GLB1L3).